Consider the following 1297-residue polypeptide: Cingulin-like protein 1 (1297 aa).

Residues 1–550 (MELYFGEYQH…ELTQQTNEET (550 aa)) form a head region. Positions 37-51 (AGSYGVSIRVQGIDG) match the ZIM motif. 3 positions are modified to phosphoserine: S113, S203, and S257. Disordered stretches follow at residues 161-208 (NEVN…TSED), 245-306 (GVGE…TPTS), 364-396 (KPGL…AFPF), and 428-467 (QRSV…DGKV). Over residues 197–206 (YGSQPNSPTS) the composition is skewed to polar residues. Residues 268–283 (ETKKNRPDVLPFRRQD) are compositionally biased toward basic and acidic residues. Residues S284, S298, and S299 each carry the phosphoserine modification. The span at 297-306 (SSSSSTTPTS) shows a compositional bias: low complexity. Residues 367 to 378 (LQRRGRSGKRNR) show a composition bias toward basic residues. The segment covering 379 to 389 (INPDDRKRSRS) has biased composition (basic and acidic residues). A phosphoserine mark is found at S389 and S392. Position 482 is a phosphoserine (S482). The disordered stretch occupies residues 586-608 (SRAAGSAQGSNQAPNSPSEGNSL). Positions 592 to 608 (AQGSNQAPNSPSEGNSL) are enriched in polar residues. The stretch at 604–1251 (EGNSLLDQKN…LQGQLNSLKK (648 aa)) forms a coiled coil. 2 positions are modified to phosphoserine: S678 and S704. The tract at residues 1259 to 1297 (SSKVLDDSDDDDLSSDAGSLYEAPLSYAFPKDSTIASQI) is tail.

Belongs to the cingulin family. In terms of assembly, homodimer or oligomer. Interacts with CD2AP and SH3BP1; probably part of a complex at cell junctions. In terms of tissue distribution, widely expressed. Highly expressed in the kidney and lung.

It localises to the cell junction. The protein localises to the tight junction. Functionally, may be involved in anchoring the apical junctional complex, especially tight junctions, to actin-based cytoskeletons. The protein is Cingulin-like protein 1 of Mus musculus (Mouse).